Consider the following 99-residue polypeptide: uncharacterized protein (99 aa).

It belongs to the ycf15 family.

The protein localises to the plastid. It localises to the chloroplast. This is an uncharacterized protein from Saccharum hybrid (Sugarcane).